The chain runs to 226 residues: UPF0758 protein M6_Spy0838 (226 aa).

The region spanning 103-225 (SVLTSVQVAE…YYSFREKSTL (123 aa)) is the MPN domain. 3 residues coordinate Zn(2+): His-174, His-176, and Asp-187. Positions 174–187 (HNHPSGNIEPSSND) match the JAMM motif motif.

Belongs to the UPF0758 family.

The polypeptide is UPF0758 protein M6_Spy0838 (Streptococcus pyogenes serotype M6 (strain ATCC BAA-946 / MGAS10394)).